The following is a 235-amino-acid chain: Aspartate/glutamate leucyltransferase (235 aa).

Belongs to the R-transferase family. Bpt subfamily.

Its subcellular location is the cytoplasm. The catalysed reaction is N-terminal L-glutamyl-[protein] + L-leucyl-tRNA(Leu) = N-terminal L-leucyl-L-glutamyl-[protein] + tRNA(Leu) + H(+). It carries out the reaction N-terminal L-aspartyl-[protein] + L-leucyl-tRNA(Leu) = N-terminal L-leucyl-L-aspartyl-[protein] + tRNA(Leu) + H(+). Its function is as follows. Functions in the N-end rule pathway of protein degradation where it conjugates Leu from its aminoacyl-tRNA to the N-termini of proteins containing an N-terminal aspartate or glutamate. The protein is Aspartate/glutamate leucyltransferase of Pseudomonas savastanoi pv. phaseolicola (strain 1448A / Race 6) (Pseudomonas syringae pv. phaseolicola (strain 1448A / Race 6)).